The primary structure comprises 637 residues: GTP-binding protein 4 (637 aa).

N-acetylalanine is present on Ala-2. Lys-103 carries the post-translational modification N6-acetyllysine; alternate. Lys-103 participates in a covalent cross-link: Glycyl lysine isopeptide (Lys-Gly) (interchain with G-Cter in SUMO2); alternate. Ser-122 carries the post-translational modification Phosphoserine. Positions 169–340 constitute an OBG-type G domain; the sequence is RTLLLCGYPN…VKTEACDRLL (172 aa). GTP contacts are provided by residues 175–182, 221–225, and 289–292; these read GYPNVGKS, DTPGI, and SKCE. Residue Lys-332 forms a Glycyl lysine isopeptide (Lys-Gly) (interchain with G-Cter in SUMO2) linkage. 2 disordered regions span residues 499–518 and 525–637; these read SKEKNTQGPRMPRTAKKVQR and MRSL…KERR. Lys-535 is covalently cross-linked (Glycyl lysine isopeptide (Lys-Gly) (interchain with G-Cter in SUMO2)). Residues 542 to 555 are compositionally biased toward basic residues; sequence VRARRSRSVTRKRK. Ser-559 is modified (phosphoserine). The span at 563 to 574 shows a compositional bias: low complexity; that stretch reads SSIARSRSRSCS. A compositionally biased stretch (basic and acidic residues) spans 576-588; it reads TPRDVSGLRDVKM. Residues 589–607 show a composition bias toward basic residues; the sequence is VKKAKTMMKKAQKKMNRLG. Positions 608-621 are enriched in basic and acidic residues; sequence KKGEADRHVFDMKP. A compositionally biased stretch (basic residues) spans 622-637; it reads KHLLSGKRKAGKKERR.

It belongs to the TRAFAC class OBG-HflX-like GTPase superfamily. OBG GTPase family. NOG subfamily. In terms of assembly, associates with pre-60S ribosomal particles. Interacts with MINAS-60 (product of an alternative open reading frame of RBM10).

It is found in the nucleus. The protein localises to the nucleolus. Its function is as follows. Involved in the biogenesis of the 60S ribosomal subunit. Acts as TP53 repressor, preventing TP53 stabilization and cell cycle arrest. This is GTP-binding protein 4 (Gtpbp4) from Rattus norvegicus (Rat).